The primary structure comprises 246 residues: Isoprenyl transferase 1 (246 aa).

The active site involves Asp19. Asp19 serves as a coordination point for Mg(2+). Residues 20–23 (GNGR), Trp24, Arg32, His36, and 64–66 (STD) contribute to the substrate site. Asn67 functions as the Proton acceptor in the catalytic mechanism. Substrate contacts are provided by residues Trp68, Arg70, Arg180, and 186 to 188 (RLS). Glu199 contributes to the Mg(2+) binding site.

It belongs to the UPP synthase family. Homodimer. The cofactor is Mg(2+).

Catalyzes the condensation of isopentenyl diphosphate (IPP) with allylic pyrophosphates generating different type of terpenoids. This Bradyrhizobium diazoefficiens (strain JCM 10833 / BCRC 13528 / IAM 13628 / NBRC 14792 / USDA 110) protein is Isoprenyl transferase 1.